Consider the following 473-residue polypeptide: Photosystem II CP43 reaction center protein (473 aa).

A propeptide spanning residues 1–14 (MKTLYSLRRFYHVE) is cleaved from the precursor. An N-acetylthreonine modification is found at T15. T15 is modified (phosphothreonine). 5 helical membrane passes run 69–93 (LFEV…PHLA), 134–155 (LIGP…RDKN), 178–200 (KAIY…RIID), 255–275 (KPFA…LSYS), and 291–312 (WYNN…ASQS). E367 is a [CaMn4O5] cluster binding site. A helical membrane pass occupies residues 447-471 (RARAAAAGFEKGINRENEPVLTLRP).

This sequence belongs to the PsbB/PsbC family. PsbC subfamily. As to quaternary structure, PSII is composed of 1 copy each of membrane proteins PsbA, PsbB, PsbC, PsbD, PsbE, PsbF, PsbH, PsbI, PsbJ, PsbK, PsbL, PsbM, PsbT, PsbX, PsbY, PsbZ, Psb30/Ycf12, at least 3 peripheral proteins of the oxygen-evolving complex and a large number of cofactors. It forms dimeric complexes. The cofactor is Binds multiple chlorophylls and provides some of the ligands for the Ca-4Mn-5O cluster of the oxygen-evolving complex. It may also provide a ligand for a Cl- that is required for oxygen evolution. PSII binds additional chlorophylls, carotenoids and specific lipids..

The protein resides in the plastid. Its subcellular location is the chloroplast thylakoid membrane. In terms of biological role, one of the components of the core complex of photosystem II (PSII). It binds chlorophyll and helps catalyze the primary light-induced photochemical processes of PSII. PSII is a light-driven water:plastoquinone oxidoreductase, using light energy to abstract electrons from H(2)O, generating O(2) and a proton gradient subsequently used for ATP formation. The sequence is that of Photosystem II CP43 reaction center protein from Guillardia theta (Cryptophyte).